The sequence spans 83 residues: Small ribosomal subunit protein bS16 (83 aa).

The protein belongs to the bacterial ribosomal protein bS16 family.

The chain is Small ribosomal subunit protein bS16 from Shewanella putrefaciens (strain CN-32 / ATCC BAA-453).